The following is a 61-amino-acid chain: Probable tautomerase stu1128 (61 aa).

Proline 2 serves as the catalytic Proton acceptor; via imino nitrogen.

Belongs to the 4-oxalocrotonate tautomerase family.

This is Probable tautomerase stu1128 from Streptococcus thermophilus (strain ATCC BAA-250 / LMG 18311).